The chain runs to 116 residues: Ino eighty subunit 4 (116 aa).

The segment covering 1–15 has biased composition (low complexity); it reads MSQESSVLSESQEQL. Disordered stretches follow at residues 1–40 and 70–116; these read MSQESSVLSESQEQLANNPKIEDTSPPSANSRDNSKPVLP and EERQ…GLDS. A compositionally biased stretch (basic and acidic residues) spans 84–108; the sequence is KGSDDKATRKKEPADEDPEVKQLEK.

As to quaternary structure, component of the chromatin-remodeling INO80 complex, at least composed of ARP4, ARP5, ARP8, RVB1, RVB2, TAF14, NHP10, IES1, IES3, IES4, IES6, ACT1, IES2, IES5 and INO80.

Its subcellular location is the nucleus. This Saccharomyces cerevisiae (strain ATCC 204508 / S288c) (Baker's yeast) protein is Ino eighty subunit 4 (IES4).